The chain runs to 239 residues: Prolyl hydroxylase EGLN3 (239 aa).

The tract at residues 62–73 (AGPRAGVSKRHL) is beta(2)beta(3) 'finger-like' loop. The segment at 88 to 104 (CEAISFLLSLIDRLVLY) is required for interaction with ADRB2. The Fe2OG dioxygenase domain occupies 116 to 214 (ERSKAMVACY…RYAMTVWYFD (99 aa)). Fe cation is bound by residues His135, Asp137, and His196. Residue Arg205 coordinates 2-oxoglutarate.

In terms of assembly, interacts with BCL2 (via its BH4 domain); the interaction disrupts the BAX-BCL4 complex inhibiting the anti-apoptotic activity of BCL2. Interacts with WDR83; the interaction leads to almost complete elimination of HIF-mediated reporter activity. Interacts with ADRB2; the interaction hydroxylates ADRB2 facilitating its ubiquitination by the VHL-E3 ligase complex. Interacts with PAX2; the interaction targets PAX2 for destruction. Interacts with PKM; the interaction hydroxylates PKM in hypoxia. Interacts with LIMD1, WTIP and AJUBA. It depends on Fe(2+) as a cofactor. The cofactor is L-ascorbate. Post-translationally, ubiquitinated by SIAH1 and/or SIAH2 in response to the unfolded protein response (UPR), leading to its degradation. As to expression, widely expressed at low levels. Expressed at higher levels in adult heart (cardiac myocytes, aortic endothelial cells and coronary artery smooth muscle), lung and placenta, and in fetal spleen, heart and skeletal muscle. Also expressed in pancreas. Localized to pancreatic acini and islet cells.

Its subcellular location is the nucleus. The protein resides in the cytoplasm. The enzyme catalyses L-prolyl-[protein] + 2-oxoglutarate + O2 = trans-4-hydroxy-L-prolyl-[protein] + succinate + CO2. It catalyses the reaction L-prolyl-[hypoxia-inducible factor alpha subunit] + 2-oxoglutarate + O2 = trans-4-hydroxy-L-prolyl-[hypoxia-inducible factor alpha subunit] + succinate + CO2. Its activity is regulated as follows. Activated in cardiovascular cells and Hela cells following exposure to hypoxia. Inhibited by polynitrogen compounds probably by chelation to Fe(2+) ions. Its function is as follows. Prolyl hydroxylase that mediates hydroxylation of proline residues in target proteins, such as PKM, TELO2, ATF4 and HIF1A. Target proteins are preferentially recognized via a LXXLAP motif. Cellular oxygen sensor that catalyzes, under normoxic conditions, the post-translational formation of 4-hydroxyproline in hypoxia-inducible factor (HIF) alpha proteins. Hydroxylates a specific proline found in each of the oxygen-dependent degradation (ODD) domains (N-terminal, NODD, and C-terminal, CODD) of HIF1A. Also hydroxylates HIF2A. Has a preference for the CODD site for both HIF1A and HIF2A. Hydroxylation on the NODD site by EGLN3 appears to require prior hydroxylation on the CODD site. Hydroxylated HIFs are then targeted for proteasomal degradation via the von Hippel-Lindau ubiquitination complex. Under hypoxic conditions, the hydroxylation reaction is attenuated allowing HIFs to escape degradation resulting in their translocation to the nucleus, heterodimerization with HIF1B, and increased expression of hypoxy-inducible genes. ELGN3 is the most important isozyme in limiting physiological activation of HIFs (particularly HIF2A) in hypoxia. Also hydroxylates PKM in hypoxia, limiting glycolysis. Under normoxia, hydroxylates and regulates the stability of ADRB2. Regulator of cardiomyocyte and neuronal apoptosis. In cardiomyocytes, inhibits the anti-apoptotic effect of BCL2 by disrupting the BAX-BCL2 complex. In neurons, has a NGF-induced proapoptotic effect, probably through regulating CASP3 activity. Also essential for hypoxic regulation of neutrophilic inflammation. Plays a crucial role in DNA damage response (DDR) by hydroxylating TELO2, promoting its interaction with ATR which is required for activation of the ATR/CHK1/p53 pathway. Also mediates hydroxylation of ATF4, leading to decreased protein stability of ATF4. The chain is Prolyl hydroxylase EGLN3 from Homo sapiens (Human).